The chain runs to 241 residues: DNA-binding dual master transcriptional regulator RpaA (241 aa).

The region spanning R3–L119 is the Response regulatory domain. D52 carries the 4-aspartylphosphate modification. The segment at residues S132–L231 is a DNA-binding region (ompR/PhoB-type).

As to quaternary structure, interacts with reduced ferredoxin (petF). Interacts with CikA, RpaB, SasA, Sll0038 (pixG) and a number of other proteins. Post-translationally, phosphorylated by SasA; phosphorylation is maximal when KaiC phosphorylation is active during the circadian cycle. Dephosphorylated by CikA. CikA and SasA cooperation generates RpaA activity oscillation that is distinct from that generated by CikA or SasA alone and offset from the rhythm of KaiC phosphorylation.

The protein localises to the cytoplasm. Response regulator of 2 two-component regulatory systems SasA/RpaA and CikA/RpaA involved in genome-wide circadian gene expression. The histidine kinases have opposing effects modulated by the clock oscillator proteins; SasA phosphorylates RpaA (stimulated by fully phosphorylated KaiC1) while CikA dephosphorylates phospho-RpaA (stimulated by the phospho-Ser-432-KaiC1-KaiB complex). In terms of biological role, the RpaA regulon is about 300 genes, and includes itself, cikA, sigE, sigG, genes involved in photosynthesis, carbon metabolism in the light and dark, phototaxis, CRISPR arrays 2 and 3 as well as nearly 90 ncRNAs. Genes are up- or down-regulated in its absence. Involved in regulation of primary sugar and amino acid metabolism and in adaptation to light changes. Regulates the accumulation of the monomeric photosystem I and the D1 protein under high light conditions. Overexpression causes cells to grow more slowly, increases levels of transcripts for clock oscillator genes in the light and the dark, increases levels of SigE protein, increases accumulation of sugar catabolic enzymes in the dark with concomitant decreases in most sugar metabolites. Plays a role in cell division; overexpression from the psbAII promoter increases expression of some cell-division-related genes, alters cell volume and changes the outer cell membrane and cell wall appearance. This is DNA-binding dual master transcriptional regulator RpaA from Synechocystis sp. (strain ATCC 27184 / PCC 6803 / Kazusa).